The chain runs to 180 residues: MTQRLKTLYQETILPKLQEEFGYKNIHQVPKLTKVTVNRGLGEASQNAKALESSLTELATITGQKPVVTRARKAIAGFKIREGMPVGVMVTLRSERMYAFLDRLINLALPRIRDFRGISPNSFDGRGNYSLGIREQLIFPEIDYDTIDQIRGMDVSIITSAQTDEEGRALLKALGMPFRS.

The protein belongs to the universal ribosomal protein uL5 family. As to quaternary structure, part of the 50S ribosomal subunit; part of the 5S rRNA/L5/L18/L25 subcomplex. Contacts the 5S rRNA and the P site tRNA. Forms a bridge to the 30S subunit in the 70S ribosome.

This is one of the proteins that bind and probably mediate the attachment of the 5S RNA into the large ribosomal subunit, where it forms part of the central protuberance. In the 70S ribosome it contacts protein S13 of the 30S subunit (bridge B1b), connecting the 2 subunits; this bridge is implicated in subunit movement. Contacts the P site tRNA; the 5S rRNA and some of its associated proteins might help stabilize positioning of ribosome-bound tRNAs. In Synechocystis sp. (strain ATCC 27184 / PCC 6803 / Kazusa), this protein is Large ribosomal subunit protein uL5.